The chain runs to 238 residues: N-methyltransferase vrtF (238 aa).

The protein belongs to the methyltransferase superfamily.

The protein operates within secondary metabolite biosynthesis; terpenoid biosynthesis. N-methyltransferase; part of the gene cluster that mediates the biosynthesis of viridicatumtoxin, a tetracycline-like fungal meroterpenoid with a unique, fused spirobicyclic ring system. The first step of the pathway is the production of the malonamoyl-CoA starter unit for the polyketide synthase vrtA. The aldolase vrtJ may be involved in the synthesis of the malonamate substrate for malonamoyl-CoA synthetase vrtB. The polyketide synthase vrtA then may utilize the malonamoyl-CoA starter unit, followed by sequential condensation of eight malonyl-CoA units to form the polyketide backbone. The cyclization of the last ring could be mediated by the lactamase-like protein vrtG. The proposed post-PKS tailoring steps are a hydroxylation at C5 catalyzed the cytochrome P450 monooxygenase vrtE, a hydroxylation at C12a catalyzed by VrtH and/or VrtI, and an O-methylation by the O-methyltransferase vrtF. VrtC is then proposed to catalyze the transfer of a geranyl group synthesized by vrtD to the aromatic C ring of the tetracyclic polyketide intermediate of viridicatumtoxin to yield previridicatumtoxin. Finally, the cytochrome P450 monooxygenase vrtK catalyzes the spirocyclization of the geranyl moiety of previridicatumtoxin to afford viridicatumtoxin. The polypeptide is N-methyltransferase vrtF (Penicillium aethiopicum).